The chain runs to 83 residues: Protein kreg-1 (83 aa).

Residues 62-83 (GHHHHHHGHHFGHHHHHHHGHH) are disordered.

In terms of tissue distribution, weakly expressed in the intestine, but expression is up-regulated in response to Cu(2+).

Functionally, plays a role in the stress response to heavy metals such as copper, probably in a fos-1/kgb-1-dependent manner. The polypeptide is Protein kreg-1 (Caenorhabditis elegans).